The primary structure comprises 230 residues: Ribosomal RNA small subunit methyltransferase G (230 aa).

S-adenosyl-L-methionine-binding positions include glycine 80, phenylalanine 85, 131–132 (VE), and arginine 145.

The protein belongs to the methyltransferase superfamily. RNA methyltransferase RsmG family.

It is found in the cytoplasm. It catalyses the reaction guanosine(527) in 16S rRNA + S-adenosyl-L-methionine = N(7)-methylguanosine(527) in 16S rRNA + S-adenosyl-L-homocysteine. Functionally, specifically methylates the N7 position of guanine in position 527 of 16S rRNA. The sequence is that of Ribosomal RNA small subunit methyltransferase G from Novosphingobium aromaticivorans (strain ATCC 700278 / DSM 12444 / CCUG 56034 / CIP 105152 / NBRC 16084 / F199).